Reading from the N-terminus, the 310-residue chain is Cytochrome P450 monooxygenase ppzG (310 aa).

C288 contributes to the heme binding site.

This sequence belongs to the cytochrome P450 family. It depends on heme as a cofactor.

It functions in the pathway secondary metabolite biosynthesis. Its function is as follows. Cytochrome P450 monooxygenase; part of the gene cluster that mediates the biosynthesis of pyrrolopyrazines, secondary metabolites showing insecticidal activity. The role of ppzG within the pathway has still to be determined. The single multifunctional NRPS ppzA is sufficient to produce peramine via condensation of 1-pyrroline-5-carboxylate and arginine, N-methylation of the alpha-amino group of arginine and reduction of the thioester and the cyclization to form an iminium ion resulting in release from the peptide synthetase. Deprotonation of this intermediate and oxidation of the pyrroline ring would give rise to peramine. In Epichloe species that produce only peramine, the peramine synthetase gene is not localized in a gene cluster, in contrast to Metarhizium species that contain additional pyrrolopyrazine biosynthesis genes. The 2-oxoglutarate-Fe(II) type oxidoreductase ppzC hydroxylates peramine to yield the newly identified compound 8-hydroxyperamine whereas ppzD converts L-proline into trans-4-hydroxy-L-proline, a precursor of peramine biosynthesis. The chain is Cytochrome P450 monooxygenase ppzG (ppzG) from Metarhizium majus (strain ARSEF 297).